A 693-amino-acid chain; its full sequence is Testis-specific Y-encoded-like protein 2 (693 aa).

Disordered regions lie at residues 1–56 (MDRP…EAAQ) and 104–125 (GYGE…EASG). K11 is covalently cross-linked (Glycyl lysine isopeptide (Lys-Gly) (interchain with G-Cter in SUMO2)). Residues S18 and S20 each carry the phosphoserine modification. Positions 23–44 (RDPPPPPPPPPLLRLPLPPPQQ) are enriched in pro residues. Glycyl lysine isopeptide (Lys-Gly) (interchain with G-Cter in SUMO2) cross-links involve residues K163 and K165. Residues 175-207 (EDEDERESMRSSRRRRRRRRRKQRKVKRESRER) form a disordered region. Positions 185 to 202 (SSRRRRRRRRRKQRKVKR) are enriched in basic residues. A Phosphothreonine modification is found at T340. 2 disordered regions span residues 474–605 (ENIC…DIEY) and 627–693 (ISDE…GKTG). Residues 487–496 (VPNNETTDNN) show a composition bias toward polar residues. A compositionally biased stretch (acidic residues) spans 509 to 519 (ESADDNNENPE). Over residues 531-542 (NPNNNENTYGNN) the composition is skewed to low complexity. Acidic residues-rich tracts occupy residues 559 to 602 (SDSD…DDRD) and 627 to 675 (ISDE…DLED). 3 positions are modified to phosphoserine: S658, S668, and S671.

Belongs to the nucleosome assembly protein (NAP) family. As to quaternary structure, interacts with histones. Interacts with CASK. Part of a complex containing CASK, TBR1 and TSPYL2. Phosphorylation at Ser-20 and/or Thr-340 impairs function on cell proliferation. In terms of tissue distribution, ubiquitously expressed, with highest levels in brain, testis and heart, and lowest levels in liver and pancreas.

Its subcellular location is the nucleus. The protein localises to the cytoplasm. Functionally, part of the CASK/TBR1/TSPYL2 transcriptional complex which modulates gene expression in response to neuronal synaptic activity, probably by facilitating nucleosome assembly. May inhibit cell proliferation by inducing p53-dependent CDKN1A expression. In Homo sapiens (Human), this protein is Testis-specific Y-encoded-like protein 2 (TSPYL2).